The chain runs to 196 residues: Peptide deformylase (196 aa).

Residues Cys-123 and His-166 each contribute to the Fe cation site. The active site involves Glu-167. His-170 is a binding site for Fe cation.

This sequence belongs to the polypeptide deformylase family. It depends on Fe(2+) as a cofactor.

The catalysed reaction is N-terminal N-formyl-L-methionyl-[peptide] + H2O = N-terminal L-methionyl-[peptide] + formate. Functionally, removes the formyl group from the N-terminal Met of newly synthesized proteins. Requires at least a dipeptide for an efficient rate of reaction. N-terminal L-methionine is a prerequisite for activity but the enzyme has broad specificity at other positions. This is Peptide deformylase from Lactococcus lactis subsp. lactis (strain IL1403) (Streptococcus lactis).